We begin with the raw amino-acid sequence, 409 residues long: tRNA-specific 2-thiouridylase MnmA (409 aa).

ATP-binding positions include 43 to 50 (AMSGGVDS) and Leu-69. Cys-137 functions as the Nucleophile in the catalytic mechanism. Residues Cys-137 and Cys-235 are joined by a disulfide bond. Gly-161 provides a ligand contact to ATP. The interval 185–187 (KDQ) is interaction with tRNA. Cys-235 acts as the Cysteine persulfide intermediate in catalysis.

Belongs to the MnmA/TRMU family.

The protein localises to the cytoplasm. It catalyses the reaction S-sulfanyl-L-cysteinyl-[protein] + uridine(34) in tRNA + AH2 + ATP = 2-thiouridine(34) in tRNA + L-cysteinyl-[protein] + A + AMP + diphosphate + H(+). Catalyzes the 2-thiolation of uridine at the wobble position (U34) of tRNA, leading to the formation of s(2)U34. This is tRNA-specific 2-thiouridylase MnmA from Caulobacter sp. (strain K31).